A 242-amino-acid polypeptide reads, in one-letter code: MSNTDNIFSAPIDKIGDFTFDARVAEVFPDMIQRSVPGYSNIISAIGMLAERFVKPHSNIYDLGCSLGAATLSMRRHIQQEGCTIFAIDNSEAMVERCKLHVNAYRSDTPVEVIEADIREVEIKDASVVVLNFTLQFLSPDDRYALLEKIHAGLRPGGILILSEKYVFEDESSNELLIDLHHDFKRANGYSELEVSQKRSAIENVMRPDSITVHKQRFEKIGFSSSEVWFQCFNFGSMFAIK.

S-adenosyl-L-methionine contacts are provided by residues Y39, 64–66 (GCS), 89–90 (DN), 117–118 (DI), N132, and R199.

Belongs to the class I-like SAM-binding methyltransferase superfamily. Cx-SAM synthase family. Homodimer.

It catalyses the reaction prephenate + S-adenosyl-L-methionine = carboxy-S-adenosyl-L-methionine + 3-phenylpyruvate + H2O. Catalyzes the conversion of S-adenosyl-L-methionine (SAM) to carboxy-S-adenosyl-L-methionine (Cx-SAM). The chain is Carboxy-S-adenosyl-L-methionine synthase from Vibrio atlanticus (strain LGP32) (Vibrio splendidus (strain Mel32)).